Consider the following 547-residue polypeptide: Fimbria adhesin EcpD (547 aa).

The N-terminal stretch at 1-23 is a signal peptide; sequence MRVNLLIAMIIFALIWPVTALRA.

It belongs to the EcpD/MatE family. Forms polymers. Interacts with EcpA.

The protein resides in the fimbrium. Its function is as follows. Part of the ecpRABCDE operon, which encodes the E.coli common pilus (ECP). ECP is found in both commensal and pathogenic strains and plays a dual role in early-stage biofilm development and host cell recognition. Tip pilus adhesin, which is required for assembly of EcpA into fibers. This Escherichia coli O157:H7 protein is Fimbria adhesin EcpD (ecpD).